The primary structure comprises 511 residues: N-acetylgalactosamine-6-O-sulfatase (511 aa).

S83 carries the 3-oxoalanine (Ser) modification.

The protein belongs to the sulfatase family. In terms of processing, the conversion to 3-oxoalanine (also known as C-formylglycine, FGly), of a serine or cysteine residue in prokaryotes and of a cysteine residue in eukaryotes, is critical for catalytic activity.

Functionally, exosulfatase involved in the degradation of the glycosaminoglycans (GAGs) chondroitin sulfate (CS) and dermatan sulfate (DS). Catalyzes the hydrolysis of the 6-sulfate groups of the N-acetyl-D-galactosamine 6-sulfate units. GAG-specific sulfatases play a key role in the persistence of the major human gut symbiont B.thetaiotaomicron in the host gastrointestinal tract. The chain is N-acetylgalactosamine-6-O-sulfatase from Bacteroides thetaiotaomicron (strain ATCC 29148 / DSM 2079 / JCM 5827 / CCUG 10774 / NCTC 10582 / VPI-5482 / E50).